The following is a 788-amino-acid chain: Calpastatin (788 aa).

Over residues 1–11 (MSQPGPKPAAS) the composition is skewed to pro residues. Disordered stretches follow at residues 1–262 (MSQP…TGPV), 289–493 (LLEK…MCSI), and 514–580 (TLAG…SQEQ). The residue at position 11 (S11) is a Phosphoserine. The span at 12–21 (PRPSRGAAAR) shows a compositional bias: low complexity. Residues 38–49 (PGEKKGSDEKKA) show a composition bias toward basic and acidic residues. Positions 65 to 87 (AATATKVTASSAATSKSPSMSTT) are enriched in low complexity. The segment covering 99–119 (EGPDQKRPREQAVKTESKKPQ) has biased composition (basic and acidic residues). K112 participates in a covalent cross-link: Glycyl lysine isopeptide (Lys-Gly) (interchain with G-Cter in SUMO2). The residue at position 129 (K129) is an N6-acetyllysine. A Phosphoserine modification is found at S165. Phosphothreonine is present on T216. At S219 the chain carries Phosphoserine. Basic and acidic residues predominate over residues 246–256 (GGHEDTNRDDP). An Inhibitory domain 1 repeat occupies 251 to 303 (TNRDDPPYTGPVVLDPMYSTYLEALGIKEGTIPPEYRKLLEKNEGITQPLPDS). Phosphoserine occurs at positions 303 and 324. Polar residues-rich tracts occupy residues 318 to 328 (SDFTCSSPTGK) and 369 to 380 (QALQALSDSLGT). An Inhibitory domain 2 repeat occupies 384-436 (DPPSHVSQAEQVKEAKAKEERQEKCGEDEDTVPAEYRLKPAKDKDGKPLLPEP). Basic and acidic residues-rich tracts occupy residues 394–408 (QVKE…QEKC) and 419–430 (YRLKPAKDKDGK). Residues 441-453 (KSLSESELIGELS) show a composition bias toward low complexity. 3 positions are modified to phosphoserine: S444, S446, and S453. T479 is modified (phosphothreonine). At S518 the chain carries Phosphoserine. A compositionally biased stretch (basic and acidic residues) spans 522–570 (READPEHEKTVEDKVKEKAKEEEHEKLGEKEETVPPDYRLEEVKDKDGK). An Inhibitory domain 3 repeat occupies 524–577 (ADPEHEKTVEDKVKEKAKEEEHEKLGEKEETVPPDYRLEEVKDKDGKPLLPKES). S594, S605, S653, and S655 each carry phosphoserine. The disordered stretch occupies residues 620–788 (VVSQTPAPST…PKAKEDARHS (169 aa)). An Inhibitory domain 4 repeat occupies 661-714 (PDPDENKPLDDKVKEKIKPEHSEKLGERDDTIPPEYRHLLDNDGKDKPEKPPTK). 2 stretches are compositionally biased toward basic and acidic residues: residues 661 to 726 (PDPD…RDPI) and 759 to 788 (ASKD…ARHS).

Belongs to the protease inhibitor I27 (calpastatin) family. In terms of tissue distribution, isoform 2 is the major form in all tissues examined. Isoform 1 accounts for 5-10% in tissues such as skeletal muscle, liver and brain, and 30% in myoblasts. Isoforms 4 and 5 are testis-specific. Isoform 6 is highly expressed in heart and skeletal muscle with lower levels in liver, brain and testis. Isoform 7 is expressed at high levels in liver.

In terms of biological role, specific inhibition of calpain (calcium-dependent cysteine protease). Plays a key role in postmortem tenderization of meat and have been proposed to be involved in muscle protein degradation in living tissue. In Mus musculus (Mouse), this protein is Calpastatin (Cast).